Consider the following 310-residue polypeptide: Tagatose-6-phosphate kinase (310 aa).

It belongs to the carbohydrate kinase PfkB family. LacC subfamily.

It catalyses the reaction D-tagatofuranose 6-phosphate + ATP = D-tagatofuranose 1,6-bisphosphate + ADP + H(+). Its pathway is carbohydrate metabolism; D-tagatose 6-phosphate degradation; D-glyceraldehyde 3-phosphate and glycerone phosphate from D-tagatose 6-phosphate: step 1/2. The chain is Tagatose-6-phosphate kinase from Staphylococcus aureus (strain MRSA252).